The chain runs to 470 residues: Probable citrate synthase, mitochondrial (470 aa).

Residues H297, H351, and D406 contribute to the active site.

Belongs to the citrate synthase family. As to quaternary structure, homodimer.

The protein localises to the mitochondrion matrix. It catalyses the reaction oxaloacetate + acetyl-CoA + H2O = citrate + CoA + H(+). Its pathway is carbohydrate metabolism; tricarboxylic acid cycle; isocitrate from oxaloacetate: step 1/2. In Leishmania infantum, this protein is Probable citrate synthase, mitochondrial.